A 224-amino-acid chain; its full sequence is UPF0502 protein Psyr_2419 (224 aa).

The protein belongs to the UPF0502 family.

The sequence is that of UPF0502 protein Psyr_2419 from Pseudomonas syringae pv. syringae (strain B728a).